The following is a 165-amino-acid chain: DNA mimic protein DMP19 (165 aa).

This sequence belongs to the DMP19-like protein family. In terms of assembly, monomer. Homodimer. The monomeric form of DMP19 interacts with the DNA-binding protein HU homodimer with 1:1 stoichiometry. The dimeric form of DMP19 interacts with the Neisseria hypothetical transcription factor (NHTF) dimer.

Its activity is regulated as follows. Activity can be modulated in vitro by crown ethers, which are small cyclic polyethers that can modify protein surface behavior dramatically by stabilizing either intra- or intermolecular interactions, thereby probably altering the protein's tertiary and quaternary structure. Its function is as follows. Acts as a DNA mimic. Interacts with DNA-binding proteins and prevents their binding to DNA by occupying the DNA binding sites on the proteins, acting as a competitive inhibitor. DMP19 is a bifunctional DNA mimic protein involved in controlling nucleoid formation as well as gene regulation. This bifunctionality depends on different oligomeric states. The monomeric form interacts with the DNA-binding protein HU, which prevents HU from binding to DNA and forming nucleoids. The dimeric form interacts with the Neisseria hypothetical transcription factor (NHTF) and prevents NHTF from binding to its DNA-binding sites, thereby blocking its repressor activity and influencing expression of the target genes. DMP19 might use these different oligomerizations to regulate genes in two steps: the monomeric form may first release selected gene regions in chromosomal DNA by preventing HU from binding to DNA and forming nucleoids, then the dimeric form blocks the gene repressor activity of NHTF and ensures the continued expression of NHTF-controlled genes. The protein is DNA mimic protein DMP19 of Neisseria meningitidis serogroup B (strain ATCC BAA-335 / MC58).